Consider the following 507-residue polypeptide: ATP synthase subunit alpha, mitochondrial (507 aa).

171-178 (GDRQTGKT) is an ATP binding site.

The protein belongs to the ATPase alpha/beta chains family. In terms of assembly, F-type ATPases have 2 components, CF(1) - the catalytic core - and CF(0) - the membrane proton channel. CF(1) has five subunits: alpha(3), beta(3), gamma(1), delta(1), epsilon(1). CF(0) has three main subunits: a, b and c.

It is found in the mitochondrion. The protein localises to the mitochondrion inner membrane. Mitochondrial membrane ATP synthase (F(1)F(0) ATP synthase or Complex V) produces ATP from ADP in the presence of a proton gradient across the membrane which is generated by electron transport complexes of the respiratory chain. F-type ATPases consist of two structural domains, F(1) - containing the extramembraneous catalytic core, and F(0) - containing the membrane proton channel, linked together by a central stalk and a peripheral stalk. During catalysis, ATP synthesis in the catalytic domain of F(1) is coupled via a rotary mechanism of the central stalk subunits to proton translocation. Subunits alpha and beta form the catalytic core in F(1). Rotation of the central stalk against the surrounding alpha(3)beta(3) subunits leads to hydrolysis of ATP in three separate catalytic sites on the beta subunits. Subunit alpha does not bear the catalytic high-affinity ATP-binding sites. The polypeptide is ATP synthase subunit alpha, mitochondrial (ATPA) (Brassica napus (Rape)).